The chain runs to 159 residues: Ribosomal RNA large subunit methyltransferase H (159 aa).

The S-adenosyl-L-methionine site is built by Leu-76 and Gly-108.

It belongs to the RNA methyltransferase RlmH family. Homodimer.

It is found in the cytoplasm. The enzyme catalyses pseudouridine(1915) in 23S rRNA + S-adenosyl-L-methionine = N(3)-methylpseudouridine(1915) in 23S rRNA + S-adenosyl-L-homocysteine + H(+). Its function is as follows. Specifically methylates the pseudouridine at position 1915 (m3Psi1915) in 23S rRNA. The polypeptide is Ribosomal RNA large subunit methyltransferase H (Limosilactobacillus reuteri (strain DSM 20016) (Lactobacillus reuteri)).